The sequence spans 426 residues: Enolase (426 aa).

Q163 lines the (2R)-2-phosphoglycerate pocket. Catalysis depends on E205, which acts as the Proton donor. Positions 242, 285, and 312 each coordinate Mg(2+). Residues K337, R366, S367, and K388 each contribute to the (2R)-2-phosphoglycerate site. Catalysis depends on K337, which acts as the Proton acceptor.

This sequence belongs to the enolase family. It depends on Mg(2+) as a cofactor.

Its subcellular location is the cytoplasm. It is found in the secreted. The protein localises to the cell surface. The enzyme catalyses (2R)-2-phosphoglycerate = phosphoenolpyruvate + H2O. Its pathway is carbohydrate degradation; glycolysis; pyruvate from D-glyceraldehyde 3-phosphate: step 4/5. Catalyzes the reversible conversion of 2-phosphoglycerate (2-PG) into phosphoenolpyruvate (PEP). It is essential for the degradation of carbohydrates via glycolysis. This Desulfosudis oleivorans (strain DSM 6200 / JCM 39069 / Hxd3) (Desulfococcus oleovorans) protein is Enolase.